The primary structure comprises 229 residues: Large ribosomal subunit protein uL1 (229 aa).

This sequence belongs to the universal ribosomal protein uL1 family. In terms of assembly, part of the 50S ribosomal subunit.

Functionally, binds directly to 23S rRNA. The L1 stalk is quite mobile in the ribosome, and is involved in E site tRNA release. Its function is as follows. Protein L1 is also a translational repressor protein, it controls the translation of the L11 operon by binding to its mRNA. This chain is Large ribosomal subunit protein uL1, found in Lactiplantibacillus plantarum (strain ATCC BAA-793 / NCIMB 8826 / WCFS1) (Lactobacillus plantarum).